The primary structure comprises 117 residues: DNA polymerase epsilon subunit 4 (117 aa).

The tract at residues 1-36 (MAAAAAAGSGTPREEEGPAGEAAASQPQAPTSVPGA) is disordered. Position 2 is an N-acetylalanine (Ala2). Thr11 is modified (phosphothreonine). Residues 19 to 30 (AGEAAASQPQAP) show a composition bias toward low complexity. At Ser25 the chain carries Phosphoserine.

Component of the DNA polymerase epsilon complex consisting of four subunits: the catalytic subunit POLE and the accessory subunits POLE2, POLE3 and POLE4. Interaction with POLE3 is a prerequisite for further binding with POLE and POLE2.

The protein resides in the nucleus. Functionally, accessory component of the DNA polymerase epsilon complex. Participates in DNA repair and in chromosomal DNA replication. This is DNA polymerase epsilon subunit 4 (POLE4) from Homo sapiens (Human).